A 533-amino-acid polypeptide reads, in one-letter code: UDP-glucuronosyltransferase 1A1 (533 aa).

The first 25 residues, methionine 1 to serine 25, serve as a signal peptide directing secretion. N-linked (GlcNAc...) asparagine glycosylation is found at asparagine 102, asparagine 295, and asparagine 347. Residues valine 491 to phenylalanine 507 traverse the membrane as a helical segment.

Belongs to the UDP-glycosyltransferase family. Homodimer. Homooligomer. Interacts with UGT1A3, UGT1A4, UGT1A6, UGT1A7, UGT1A8, UGT1A9 and UGT1A10 to form heterodimers. Isoform 1 interacts with isoform 2/i2 suggesting that oligomerization is involved in negative regulation of transferase activity by isoform 2. Isoform 1 also interacts with respective i2 isoforms of UGT1A3, UGT1A4, UGT1A6, UGT1A7, UGT1A8, UGT1A9 and UGT1A10. As to expression, expressed in liver, colon and small intestine. Not expressed in kidney, esophagus and skin. In terms of tissue distribution, expressed in liver, colon, small intestine and kidney. Not expressed in esophagus and skin.

It is found in the endoplasmic reticulum membrane. Its subcellular location is the cytoplasm. The protein resides in the perinuclear region. It carries out the reaction glucuronate acceptor + UDP-alpha-D-glucuronate = acceptor beta-D-glucuronoside + UDP + H(+). The catalysed reaction is 17beta-estradiol + UDP-alpha-D-glucuronate = 17beta-estradiol 3-O-(beta-D-glucuronate) + UDP + H(+). It catalyses the reaction 2-hydroxyestrone + UDP-alpha-D-glucuronate = 2-hydroxyestrone 3-O-(beta-D-glucuronate) + UDP + H(+). The enzyme catalyses 2-hydroxy-17beta-estradiol + UDP-alpha-D-glucuronate = 2-hydroxy-17beta-estradiol 3-O-(beta-D-glucuronate) + UDP + H(+). It carries out the reaction 2-methoxy-17beta-estradiol + UDP-alpha-D-glucuronate = 2-methoxy-17beta-estradiol 3-O-(beta-D-glucuronate) + UDP + H(+). The catalysed reaction is 17alpha-estradiol + UDP-alpha-D-glucuronate = 17alpha-estradiol 3-O-(beta-D-glucuronate) + UDP + H(+). It catalyses the reaction 16beta,17beta-estriol + UDP-alpha-D-glucuronate = 16beta,17beta-estriol 16-O-(beta-D-glucuronate) + UDP + H(+). The enzyme catalyses losartan + UDP-alpha-D-glucuronate = losartan-2-N-beta-D-glucuronide + UDP. It carries out the reaction prunetin + UDP-alpha-D-glucuronate = prunetin-4'-O-beta-D-glucuronide + UDP. The catalysed reaction is SN-38 + UDP-alpha-D-glucuronate = SN-38 O-beta-D-glucuronide + UDP + H(+). It catalyses the reaction (4Z,15Z)-bilirubin IXalpha + UDP-alpha-D-glucuronate = (4Z,15Z)-bilirubin IXalpha C12-beta-D-glucuronoside + UDP. The enzyme catalyses (4Z,15Z)-bilirubin IXalpha + UDP-alpha-D-glucuronate = (4Z,15Z)-bilirubin IXalpha C8-beta-D-glucuronoside + UDP. It carries out the reaction (4Z,15Z)-bilirubin IXalpha C8-beta-D-glucuronoside + UDP-alpha-D-glucuronate = (4Z,15Z)-bilirubin IXalpha C8,C12-beta-D-bisglucuronoside + UDP. The catalysed reaction is (4Z,15Z)-bilirubin IXalpha C12-beta-D-glucuronoside + UDP-alpha-D-glucuronate = (4Z,15Z)-bilirubin IXalpha C8,C12-beta-D-bisglucuronoside + UDP. It catalyses the reaction 8-iso-prostaglandin F2alpha + UDP-alpha-D-glucuronate = 8-iso-prostaglandin F2alpha-glucuronide + UDP + H(+). The enzyme catalyses (5Z,8Z,11Z,14Z)-eicosatetraenoate + UDP-alpha-D-glucuronate = O-[(5Z),(8Z),(11Z),(14Z)-eicosatetraenoyl]-beta-D-glucuronate + UDP. It carries out the reaction 15-hydroxy-(5Z,8Z,11Z,13E)-eicosatetraenoate + UDP-alpha-D-glucuronate = 15-O-(beta-D-glucuronosyl)-(5Z,8Z,11Z,14Z)-eicosatetraenoate + UDP + H(+). The catalysed reaction is 20-hydroxy-(5Z,8Z,11Z,14Z)-eicosatetraenoate + UDP-alpha-D-glucuronate = 20-O-(beta-D-glucuronosyl)-(5Z,8Z,11Z,14Z)-eicosatetraenoate + UDP + H(+). It catalyses the reaction prostaglandin B1 + UDP-alpha-D-glucuronate = 15-O-(beta-D-glucuronosyl)-prostaglandin B1 + UDP + H(+). The enzyme catalyses (E)-ferulate + UDP-alpha-D-glucuronate = (E)-4-O-(beta-D-glucuronosyl)-ferulate + UDP + H(+). It carries out the reaction (E)-ferulate + UDP-alpha-D-glucuronate = (E)-ferulic acid beta-D-glucuronate ester + UDP. Functionally, UDP-glucuronosyltransferase (UGT) that catalyzes phase II biotransformation reactions in which lipophilic substrates are conjugated with glucuronic acid to increase the metabolite's water solubility, thereby facilitating excretion into either the urine or bile. Essential for the elimination and detoxification of drugs, xenobiotics and endogenous compounds. Catalyzes the glucuronidation of endogenous estrogen hormones such as estradiol, estrone and estriol. Involved in the glucuronidation of bilirubin, a degradation product occurring in the normal catabolic pathway that breaks down heme in vertebrates. Involved in the glucuronidation of arachidonic acid (AA) and AA-derived eicosanoids including 15-HETE, 20-HETE, PGB1 and F2-isoprostane (8-iso-PGF2alpha). Involved in the glucuronidation of the phytochemical ferulic acid at the phenolic or the carboxylic acid group. Also catalyzes the glucuronidation the isoflavones genistein, daidzein, glycitein, formononetin, biochanin A and prunetin, which are phytoestrogens with anticancer and cardiovascular properties. Involved in the glucuronidation of the AGTR1 angiotensin receptor antagonist losartan, a drug which can inhibit the effect of angiotensin II. Involved in the biotransformation of 7-ethyl-10-hydroxycamptothecin (SN-38), the pharmacologically active metabolite of the anticancer drug irinotecan. Lacks UGT glucuronidation activity but acts as a negative regulator of isoform 1. In Homo sapiens (Human), this protein is UDP-glucuronosyltransferase 1A1.